A 336-amino-acid chain; its full sequence is Tetraacyldisaccharide 4'-kinase (336 aa).

ATP is bound at residue T60–T67.

It belongs to the LpxK family.

The catalysed reaction is a lipid A disaccharide + ATP = a lipid IVA + ADP + H(+). Its pathway is glycolipid biosynthesis; lipid IV(A) biosynthesis; lipid IV(A) from (3R)-3-hydroxytetradecanoyl-[acyl-carrier-protein] and UDP-N-acetyl-alpha-D-glucosamine: step 6/6. In terms of biological role, transfers the gamma-phosphate of ATP to the 4'-position of a tetraacyldisaccharide 1-phosphate intermediate (termed DS-1-P) to form tetraacyldisaccharide 1,4'-bis-phosphate (lipid IVA). This Pseudomonas fluorescens (strain SBW25) protein is Tetraacyldisaccharide 4'-kinase.